Reading from the N-terminus, the 346-residue chain is L-threonine dehydratase catabolic TdcB (346 aa).

Residue 59 to 60 (FT) coordinates AMP. Residue Lys-64 is modified to N6-(pyridoxal phosphate)lysine. AMP is bound by residues Gln-94, 125 to 126 (GY), and Asn-321.

The protein belongs to the serine/threonine dehydratase family. In the native structure, TdcB is in a dimeric form, whereas in the TdcB-AMP complex, it exists in a tetrameric form (dimer of dimers). It depends on pyridoxal 5'-phosphate as a cofactor.

The catalysed reaction is L-threonine = 2-oxobutanoate + NH4(+). It functions in the pathway amino-acid degradation; L-threonine degradation via propanoate pathway; propanoate from L-threonine: step 1/4. With respect to regulation, each protein molecule can bind up to four molecules of AMP, which act as an allosteric activator to the enzyme. Its function is as follows. Catalyzes the anaerobic formation of alpha-ketobutyrate and ammonia from threonine in a two-step reaction. The first step involved a dehydration of threonine and a production of enamine intermediates (aminocrotonate), which tautomerizes to its imine form (iminobutyrate). Both intermediates are unstable and short-lived. The second step is the nonenzymatic hydrolysis of the enamine/imine intermediates to form 2-ketobutyrate and free ammonia. In the low water environment of the cell, the second step is accelerated by RidA. The polypeptide is L-threonine dehydratase catabolic TdcB (tdcB) (Staphylococcus aureus (strain USA300)).